A 225-amino-acid chain; its full sequence is MPIGIPKVAYRIPGESVSTYVDVYNRLYRERILFLGEDLDDEVANQLIGVMVFLNSEDDTKGIFFYINSPGGSMNSGLGVYDMIQHINVDVTTICMGLAASMASFILAGGTPGQRLMFPHARVMLHQPMGGNGGKAKYMVEESVEVKRLRELIAHLYAKRTGQPIERIRIDMNRDNFMRPRAAKEYGLIDHMITHITELDELEKDASDLRRFGGVDLTKLNKQGS.

Serine 101 acts as the Nucleophile in catalysis. Residue histidine 126 is part of the active site.

Belongs to the peptidase S14 family. In terms of assembly, component of the chloroplastic Clp protease core complex.

The protein localises to the plastid. It is found in the chloroplast stroma. It carries out the reaction Hydrolysis of proteins to small peptides in the presence of ATP and magnesium. alpha-casein is the usual test substrate. In the absence of ATP, only oligopeptides shorter than five residues are hydrolyzed (such as succinyl-Leu-Tyr-|-NHMec, and Leu-Tyr-Leu-|-Tyr-Trp, in which cleavage of the -Tyr-|-Leu- and -Tyr-|-Trp bonds also occurs).. Functionally, cleaves peptides in various proteins in a process that requires ATP hydrolysis. Has a chymotrypsin-like activity. Plays a major role in the degradation of misfolded proteins. This Chlorokybus atmophyticus (Soil alga) protein is ATP-dependent Clp protease proteolytic subunit.